The sequence spans 270 residues: Glucosamine-6-phosphate deaminase (270 aa).

Asp72 (proton acceptor; for enolization step) is an active-site residue. Catalysis depends on Asp141, which acts as the For ring-opening step. The active-site Proton acceptor; for ring-opening step is the His143. The active-site For ring-opening step is the Glu148.

The protein belongs to the glucosamine/galactosamine-6-phosphate isomerase family. NagB subfamily. As to quaternary structure, homohexamer.

It catalyses the reaction alpha-D-glucosamine 6-phosphate + H2O = beta-D-fructose 6-phosphate + NH4(+). It functions in the pathway amino-sugar metabolism; N-acetylneuraminate degradation; D-fructose 6-phosphate from N-acetylneuraminate: step 5/5. With respect to regulation, allosterically activated by N-acetylglucosamine 6-phosphate (GlcNAc6P). Functionally, catalyzes the reversible isomerization-deamination of glucosamine 6-phosphate (GlcN6P) to form fructose 6-phosphate (Fru6P) and ammonium ion. The polypeptide is Glucosamine-6-phosphate deaminase (Photorhabdus laumondii subsp. laumondii (strain DSM 15139 / CIP 105565 / TT01) (Photorhabdus luminescens subsp. laumondii)).